We begin with the raw amino-acid sequence, 530 residues long: Cation transporter HKT2;1 (530 aa).

Residues 1 to 40 (MTSIYHDFIHNKLQSFGRIGRYFVNFVVLAHRFIALHIHP) are Cytoplasmic-facing. 2 consecutive transmembrane segments (helical) span residues 41 to 61 (FWIQ…LLMF) and 102 to 122 (IVVI…FLGL). Residues 123-186 (MLRLNHKHNP…DLKRSKRLRW (64 aa)) lie on the Cytoplasmic side of the membrane. 2 helical membrane-spanning segments follow: residues 187–207 (FLGF…FLLV) and 260–280 (GLLL…PLFL). At 281 to 317 (RLLIWFLGKVTKLRELKLMIKNPEELQYDYLLPKLPT) the chain is on the cytoplasmic side. A run of 2 helical transmembrane segments spans residues 318 to 338 (AFLA…FGAV) and 372 to 392 (IDCS…MYLP). Residues 393 to 418 (PSTTFALSNGDEKTANKKAKRKLGLV) are Cytoplasmic-facing. 2 consecutive transmembrane segments (helical) span residues 419-439 (VQNL…VAFI) and 494-514 (SLSG…MLYG). Over 515-530 (RLKAFTKGTGEYWRLW) the chain is Cytoplasmic.

This sequence belongs to the TrkH potassium transport family. HKT (TC 2.A.38.3) subfamily. As to expression, expressed in epidermis and vascular tissue of endodermis in roots, and in cells surrounding the vasculature in leaves.

It localises to the membrane. It catalyses the reaction Na(+)(in) = Na(+)(out). Functionally, seems to be involved in regulation of potassium-sodium homeostasis. Seems to act as a high-affinity sodium transporter, which mediates increased sodium uptake in roots under potassium deficiency and contributes to sodium accumulation and salt toxicity. Involved in nutritional sodium uptake and distribution in potassium-starved roots to allow plant growth. May also act as a potassium transporter. Functions as a sodium-potassium cotransporter. The sequence is that of Cation transporter HKT2;1 from Oryza sativa subsp. indica (Rice).